The sequence spans 332 residues: Melanocortin receptor 4 (332 aa).

The Extracellular segment spans residues 1–43; it reads MNSTQPLGMHTSLHSWNRSAHGMPTNVSESLAKGYSDGGCYEQ. N-linked (GlcNAc...) asparagine glycans are attached at residues Asn-2, Asn-17, and Asn-26. 2 cysteine pairs are disulfide-bonded: Cys-40/Cys-279 and Cys-271/Cys-277. The chain crosses the membrane as a helical span at residues 44-69; sequence LFVSPEVFVTLGVISLLENILVIVAI. At 70-81 the chain is on the cytoplasmic side; sequence AKNKNLHSPMYF. The helical transmembrane segment at 82 to 106 threads the bilayer; the sequence is FICSLAVADMLVSVSNGSETIVITL. Residues Glu-100, Asp-122, and Asp-126 each contribute to the Ca(2+) site. At 107 to 123 the chain is on the extracellular side; that stretch reads LNSTDTDAQSFTVDIDN. The helical transmembrane segment at 124–145 threads the bilayer; sequence VIDSVICSSLLASICSLLSIAV. Residues 146 to 165 are Cytoplasmic-facing; that stretch reads DRYFTIFYALQYHNIMTVKR. A helical membrane pass occupies residues 166–186; that stretch reads VAITISAIWAACTVSGVLFII. The Extracellular portion of the chain corresponds to 187–191; it reads YSDSS. Residues 192-215 traverse the membrane as a helical segment; that stretch reads AVIICLITVFFTMLALMASLYVHM. Topologically, residues 216 to 248 are cytoplasmic; it reads FLMARLHIKRIAVLPGSGTIRQGANMKGAITLT. The helical transmembrane segment at 249–271 threads the bilayer; it reads ILIGVFVVCWAPFFLHLIFYISC. At 272–280 the chain is on the extracellular side; that stretch reads PQNPYCVCF. Residues 281-304 form a helical membrane-spanning segment; the sequence is MSHFNLYLILIMCNSIIDPLIYAL. Topologically, residues 305–332 are cytoplasmic; sequence RSQELRKTFKEIICCSPLGGLCDLSSRY. Cys-318 carries S-palmitoyl cysteine lipidation.

It belongs to the G-protein coupled receptor 1 family. Homodimer; disulfide-linked, also forms higher order oligomers. Interacts with GNAS. Interacts with ATRNL1. Interacts with MGRN1; this interaction competes with GNAS-binding and thus inhibits agonist-induced cAMP production. Interacts with MRAP and MRAP2; these associated factors increase ligand-sensitivity and generation of cAMP.

Its subcellular location is the cell membrane. Its function is as follows. Hormone receptor that acts as a key component of the leptin-melanocortin pathway at the intersection of homeostatic maintenance of energetic state. Plays a role in regulating food intake: activation by a stimulating hormone such as anorexigenic alpha-melanocyte stimulating hormone (alpha-MSH) inhibits appetite, whereas binding to a natural antagonist like Agouti-related protein/AGRP promotes appetite. G-protein-coupled receptor that activates conventional Galphas signaling leading to induction of anorexogenic signaling in the hypothalamus to result in negative energy balance. Regulates the firing activity of neurons from the hypothalamus by alpha-MSH and AGRP independently of Galphas signaling by ligand-induced coupling of closure of inwardly rectifying potassium channel KCNJ13. In intestinal epithelial cells, plays a role in the inhibition of hepatic glucose production via nesfatin-1/NUCB2 leading to increased cyclic adenosine monophosphate (cAMP) levels and glucagon-like peptide 1 (GLP-1) secretion in the intestinal epithelium. This Bos taurus (Bovine) protein is Melanocortin receptor 4 (MC4R).